Consider the following 357-residue polypeptide: Membrane-bound lytic murein transglycosylase C (357 aa).

The signal sequence occupies residues 1–15 (MKKYLLLALLPFLYA). Cysteine 16 carries the N-palmitoyl cysteine lipid modification. Cysteine 16 is lipidated: S-diacylglycerol cysteine.

The protein belongs to the transglycosylase Slt family.

It localises to the cell outer membrane. The catalysed reaction is Exolytic cleavage of the (1-&gt;4)-beta-glycosidic linkage between N-acetylmuramic acid (MurNAc) and N-acetylglucosamine (GlcNAc) residues in peptidoglycan, from either the reducing or the non-reducing ends of the peptidoglycan chains, with concomitant formation of a 1,6-anhydrobond in the MurNAc residue.. Its function is as follows. Murein-degrading enzyme. May play a role in recycling of muropeptides during cell elongation and/or cell division. In Haemophilus influenzae (strain PittGG), this protein is Membrane-bound lytic murein transglycosylase C.